We begin with the raw amino-acid sequence, 302 residues long: N-acetyl-D-glucosamine kinase (302 aa).

Residues 4-11 (GFDVGGTK) and 133-140 (GFGGGLVY) each bind ATP. Positions 157, 177, 179, and 184 each coordinate Zn(2+).

Belongs to the ROK (NagC/XylR) family. NagK subfamily.

It carries out the reaction N-acetyl-D-glucosamine + ATP = N-acetyl-D-glucosamine 6-phosphate + ADP + H(+). Its pathway is cell wall biogenesis; peptidoglycan recycling. In terms of biological role, catalyzes the phosphorylation of N-acetyl-D-glucosamine (GlcNAc) derived from cell-wall degradation, yielding GlcNAc-6-P. The protein is N-acetyl-D-glucosamine kinase of Vibrio cholerae serotype O1 (strain ATCC 39315 / El Tor Inaba N16961).